Consider the following 360-residue polypeptide: Histidinol-phosphate aminotransferase (360 aa).

Lys-213 carries the post-translational modification N6-(pyridoxal phosphate)lysine.

It belongs to the class-II pyridoxal-phosphate-dependent aminotransferase family. Histidinol-phosphate aminotransferase subfamily. Homodimer. Requires pyridoxal 5'-phosphate as cofactor.

The enzyme catalyses L-histidinol phosphate + 2-oxoglutarate = 3-(imidazol-4-yl)-2-oxopropyl phosphate + L-glutamate. It functions in the pathway amino-acid biosynthesis; L-histidine biosynthesis; L-histidine from 5-phospho-alpha-D-ribose 1-diphosphate: step 7/9. The protein is Histidinol-phosphate aminotransferase of Baumannia cicadellinicola subsp. Homalodisca coagulata.